Here is a 278-residue protein sequence, read N- to C-terminus: Nucleotide-binding protein Tmel_1373 (278 aa).

10-17 contacts ATP; sequence GLSGAGKS. GTP is bound at residue 58–61; it reads DSRS.

This sequence belongs to the RapZ-like family.

In terms of biological role, displays ATPase and GTPase activities. The chain is Nucleotide-binding protein Tmel_1373 from Thermosipho melanesiensis (strain DSM 12029 / CIP 104789 / BI429).